A 379-amino-acid chain; its full sequence is Pathogen-associated molecular patterns-induced protein A70 (379 aa).

The chain crosses the membrane as a helical span at residues 7–29 (VASFFTPTTLFLLLNLMIGTIVV). A glycan (N-linked (GlcNAc...) asparagine) is linked at asparagine 122. The tract at residues 133-154 (TGSDPHSHSHSHLDLHPDPAPA) is disordered. Positions 137 to 149 (PHSHSHSHLDLHP) are enriched in basic and acidic residues. Asparagine 170 carries an N-linked (GlcNAc...) asparagine glycan. 2 disordered regions span residues 216-238 (PEED…LTRA) and 256-347 (SDPD…DGVD). Polar residues predominate over residues 221–231 (PTGTGVNSQIN). Composition is skewed to basic and acidic residues over residues 256-285 (SDPD…ESKK) and 322-335 (SLER…RVER).

Its subcellular location is the membrane. This is Pathogen-associated molecular patterns-induced protein A70 from Arabidopsis thaliana (Mouse-ear cress).